The following is a 201-amino-acid chain: Pyridoxine/pyridoxamine 5'-phosphate oxidase (201 aa).

Residues 45–50 (RMVLLK), 65–66 (YT), arginine 71, lysine 72, and glutamine 94 each bind FMN. Lysine 50 is a binding site for substrate. Positions 112, 116, and 120 each coordinate substrate. FMN is bound by residues 129–130 (QS) and tryptophan 174. Residue 180 to 182 (RLH) participates in substrate binding. Arginine 184 contributes to the FMN binding site.

The protein belongs to the pyridoxamine 5'-phosphate oxidase family. In terms of assembly, homodimer. The cofactor is FMN.

The catalysed reaction is pyridoxamine 5'-phosphate + O2 + H2O = pyridoxal 5'-phosphate + H2O2 + NH4(+). It carries out the reaction pyridoxine 5'-phosphate + O2 = pyridoxal 5'-phosphate + H2O2. The protein operates within cofactor metabolism; pyridoxal 5'-phosphate salvage; pyridoxal 5'-phosphate from pyridoxamine 5'-phosphate: step 1/1. It participates in cofactor metabolism; pyridoxal 5'-phosphate salvage; pyridoxal 5'-phosphate from pyridoxine 5'-phosphate: step 1/1. Catalyzes the oxidation of either pyridoxine 5'-phosphate (PNP) or pyridoxamine 5'-phosphate (PMP) into pyridoxal 5'-phosphate (PLP). The chain is Pyridoxine/pyridoxamine 5'-phosphate oxidase from Rhodospirillum rubrum (strain ATCC 11170 / ATH 1.1.1 / DSM 467 / LMG 4362 / NCIMB 8255 / S1).